The following is a 224-amino-acid chain: uncharacterized protein (224 aa).

Residues 108 to 137 are a coiled coil; sequence QLALDRAELNESIRATNENLALQYSKLQTE.

This is an uncharacterized protein from Human picobirnavirus (strain Human/Thailand/Hy005102/-) (PBV).